The primary structure comprises 272 residues: Nitrogenase iron protein (272 aa).

8 to 15 (GKGGIGKS) is a binding site for ATP. Cys-94 contacts [4Fe-4S] cluster. Arg-97 bears the ADP-ribosylarginine; by dinitrogenase reductase ADP-ribosyltransferase mark. [4Fe-4S] cluster is bound at residue Cys-129.

This sequence belongs to the NifH/BchL/ChlL family. Homodimer. Requires [4Fe-4S] cluster as cofactor. Post-translationally, the reversible ADP-ribosylation of Arg-97 inactivates the nitrogenase reductase and regulates nitrogenase activity.

It carries out the reaction N2 + 8 reduced [2Fe-2S]-[ferredoxin] + 16 ATP + 16 H2O = H2 + 8 oxidized [2Fe-2S]-[ferredoxin] + 2 NH4(+) + 16 ADP + 16 phosphate + 6 H(+). The key enzymatic reactions in nitrogen fixation are catalyzed by the nitrogenase complex, which has 2 components: the iron protein and the molybdenum-iron protein. The chain is Nitrogenase iron protein from Desulforamulus reducens (strain ATCC BAA-1160 / DSM 100696 / MI-1) (Desulfotomaculum reducens).